A 314-amino-acid polypeptide reads, in one-letter code: MTFPHRHLLGIEALRPEEINTLLDLADKYAALNRQPDKHADALKGLTQINMFFENSTRTQASFEIAGKRLGADVMNMAMQASSVKKGETLIDTALTLNAMHPDLLVVRHPQSGAVDLLAQKVNCAVLNAGDGRHEHPTQALLDALTIRRAKGRLHRLSIAICGDIAHSRVARSNIMLLGKMENRIRLIGPPTLMPSGISEFGVEVFNDMNAGLKDVDVVMMLRLQKERMDGGFIPSEREYYHRFGLDADKLSNAKPDAIIMHPGPMNRGVEIDGTLADDINRSVIQDQVEMGVAVRMAAMDLLSQNLRLTRGAE.

The carbamoyl phosphate site is built by arginine 58 and threonine 59. Residue lysine 86 coordinates L-aspartate. Residues arginine 108, histidine 136, and glutamine 139 each coordinate carbamoyl phosphate. The L-aspartate site is built by arginine 169 and arginine 223. The carbamoyl phosphate site is built by glycine 264 and proline 265.

Belongs to the aspartate/ornithine carbamoyltransferase superfamily. ATCase family. As to quaternary structure, heterododecamer (2C3:3R2) of six catalytic PyrB chains organized as two trimers (C3), and six regulatory PyrI chains organized as three dimers (R2).

It catalyses the reaction carbamoyl phosphate + L-aspartate = N-carbamoyl-L-aspartate + phosphate + H(+). Its pathway is pyrimidine metabolism; UMP biosynthesis via de novo pathway; (S)-dihydroorotate from bicarbonate: step 2/3. Functionally, catalyzes the condensation of carbamoyl phosphate and aspartate to form carbamoyl aspartate and inorganic phosphate, the committed step in the de novo pyrimidine nucleotide biosynthesis pathway. This Roseobacter denitrificans (strain ATCC 33942 / OCh 114) (Erythrobacter sp. (strain OCh 114)) protein is Aspartate carbamoyltransferase catalytic subunit.